The following is a 243-amino-acid chain: 3-deoxy-manno-octulosonate cytidylyltransferase (243 aa).

The protein belongs to the KdsB family.

It is found in the cytoplasm. It catalyses the reaction 3-deoxy-alpha-D-manno-oct-2-ulosonate + CTP = CMP-3-deoxy-beta-D-manno-octulosonate + diphosphate. It functions in the pathway nucleotide-sugar biosynthesis; CMP-3-deoxy-D-manno-octulosonate biosynthesis; CMP-3-deoxy-D-manno-octulosonate from 3-deoxy-D-manno-octulosonate and CTP: step 1/1. The protein operates within bacterial outer membrane biogenesis; lipopolysaccharide biosynthesis. Its function is as follows. Activates KDO (a required 8-carbon sugar) for incorporation into bacterial lipopolysaccharide in Gram-negative bacteria. The chain is 3-deoxy-manno-octulosonate cytidylyltransferase from Helicobacter pylori (strain ATCC 700392 / 26695) (Campylobacter pylori).